Consider the following 437-residue polypeptide: Glutamate-1-semialdehyde 2,1-aminomutase 1 (437 aa).

N6-(pyridoxal phosphate)lysine is present on lysine 268.

The protein belongs to the class-III pyridoxal-phosphate-dependent aminotransferase family. HemL subfamily. Homodimer. The cofactor is pyridoxal 5'-phosphate.

It localises to the cytoplasm. It carries out the reaction (S)-4-amino-5-oxopentanoate = 5-aminolevulinate. It functions in the pathway porphyrin-containing compound metabolism; protoporphyrin-IX biosynthesis; 5-aminolevulinate from L-glutamyl-tRNA(Glu): step 2/2. The polypeptide is Glutamate-1-semialdehyde 2,1-aminomutase 1 (Halalkalibacterium halodurans (strain ATCC BAA-125 / DSM 18197 / FERM 7344 / JCM 9153 / C-125) (Bacillus halodurans)).